The chain runs to 352 residues: D-alanine--D-alanine ligase A (352 aa).

The 204-residue stretch at 138-341 folds into the ATP-grasp domain; the sequence is KRMVQSAGLV…PPKLVGALVE (204 aa). Position 165 to 220 (165 to 220) interacts with ATP; that stretch reads ECLGSSTLFVKPATSGSSIGVSRVSNALEYAAAFAIAAREDTKVLVEAAVCGREIE. Mg(2+)-binding residues include Asp-295, Glu-308, and Asn-310.

The protein belongs to the D-alanine--D-alanine ligase family. Mg(2+) serves as cofactor. Requires Mn(2+) as cofactor.

It localises to the cytoplasm. The enzyme catalyses 2 D-alanine + ATP = D-alanyl-D-alanine + ADP + phosphate + H(+). It functions in the pathway cell wall biogenesis; peptidoglycan biosynthesis. Functionally, cell wall formation. The polypeptide is D-alanine--D-alanine ligase A (Pseudomonas putida (strain ATCC 47054 / DSM 6125 / CFBP 8728 / NCIMB 11950 / KT2440)).